A 91-amino-acid chain; its full sequence is Sec-independent protein translocase protein TatA (91 aa).

Residues 1–21 (MGAMQPMHWLIVAVVVVILFG) traverse the membrane as a helical segment.

This sequence belongs to the TatA/E family. As to quaternary structure, the Tat system comprises two distinct complexes: a TatABC complex, containing multiple copies of TatA, TatB and TatC subunits, and a separate TatA complex, containing only TatA subunits. Substrates initially bind to the TatABC complex, which probably triggers association of the separate TatA complex to form the active translocon.

It localises to the cell membrane. Functionally, part of the twin-arginine translocation (Tat) system that transports large folded proteins containing a characteristic twin-arginine motif in their signal peptide across membranes. TatA could form the protein-conducting channel of the Tat system. This is Sec-independent protein translocase protein TatA from Rhodococcus erythropolis (strain PR4 / NBRC 100887).